We begin with the raw amino-acid sequence, 404 residues long: Glycosylated lysosomal membrane protein (404 aa).

Residues 1 to 35 form the signal peptide; the sequence is MFRCWGPHWGWVPCAPTPWLLLSLLVCSAPFGLQG. Topologically, residues 36 to 370 are lumenal; sequence EETRQVSMEV…VDIFSPLVLG (335 aa). Residues Asn-64, Asn-85, Asn-94, Asn-133, Asn-157, Asn-166, Asn-185, Asn-228, and Asn-331 are each glycosylated (N-linked (GlcNAc...) asparagine). Residues 371–391 traverse the membrane as a helical segment; sequence IMAVALGAPGLMFLGGGLFLL. The Cytoplasmic segment spans residues 392-404; that stretch reads LRHRRYSEYQSIN. A Lysosomal targeting motif motif is present at residues 400–404; that stretch reads YQSIN.

This sequence belongs to the GLMP family. In terms of assembly, interacts (via lumenal domain) with lysosomal protein MFSD1; the interaction starts while both proteins are still in the endoplasmic reticulum and is required for stabilization of MFSD1 in lysosomes but has no direct effect on its targeting to lysosomes or transporter activity. Post-translationally, highly N-glycosylated. N-glycosylation is essential for GLMP stability and for MFSD1 lysosomal localization. Detected in brain, heart, liver, kidney, lung, intestine, testis and spleen. Expressed at highest levels in kidney cortex. However, another study reports highest expression levels in lung. Expressed in myoblasts with expression increasing during differentiation into myotubes.

The protein resides in the lysosome membrane. In terms of biological role, required to protect lysosomal transporter MFSD1 from lysosomal proteolysis and for MFSD1 lysosomal localization. The polypeptide is Glycosylated lysosomal membrane protein (Mus musculus (Mouse)).